The chain runs to 328 residues: MSTQGFLKPRSIEVEPVGTHHAKIVMEPFERGYGHTLGNALRRILLSSMTGYAPTEVQMTGVVHEYSTIPGVREDVVDILLNLKGVVFKLHNRDEVTLVLRKNGAGTVVASDIELPHDVEIINPDHLICNLTEAGKVEMQIKVEKGRGYVPGNVRALSEDRTHTIGRIVLDASFSPVRRVSYAVESARVEQRTDLDKLVLDIETNGVISPEEAVRQSARILMDQISVFAALEGAGDSYEAPVRGTPQIDPVLLRPVDDLELTVRSANCLKAENIYYIGDLIQRTENELLKTPNLGRKSLNEIKEVLAARGLTLGMKLENWPPLGLERP.

Residues 1–232 form an alpha N-terminal domain (alpha-NTD) region; that stretch reads MSTQGFLKPR…DQISVFAALE (232 aa). An alpha C-terminal domain (alpha-CTD) region spans residues 248-328; the sequence is IDPVLLRPVD…NWPPLGLERP (81 aa).

Belongs to the RNA polymerase alpha chain family. In terms of assembly, homodimer. The RNAP catalytic core consists of 2 alpha, 1 beta, 1 beta' and 1 omega subunit. When a sigma factor is associated with the core the holoenzyme is formed, which can initiate transcription.

It carries out the reaction RNA(n) + a ribonucleoside 5'-triphosphate = RNA(n+1) + diphosphate. In terms of biological role, DNA-dependent RNA polymerase catalyzes the transcription of DNA into RNA using the four ribonucleoside triphosphates as substrates. This is DNA-directed RNA polymerase subunit alpha from Bordetella petrii (strain ATCC BAA-461 / DSM 12804 / CCUG 43448).